A 75-amino-acid chain; its full sequence is MPVDVAPGVIKKLMFFTAAMVICPLLTFFSIKQFTTNTIVSGGLAALAANLVLIGYIVVAFMEDTTDVKAESKKD.

Over 1 to 8 (MPVDVAPG) the chain is Cytoplasmic. Residues 9–29 (VIKKLMFFTAAMVICPLLTFF) form a helical membrane-spanning segment. Residues 30-41 (SIKQFTTNTIVS) are Lumenal-facing. Residues 42 to 62 (GGLAALAANLVLIGYIVVAFM) traverse the membrane as a helical segment. Residues 63-75 (EDTTDVKAESKKD) lie on the Cytoplasmic side of the membrane.

It belongs to the VMA21 family.

Its subcellular location is the endoplasmic reticulum membrane. It is found in the endoplasmic reticulum-Golgi intermediate compartment membrane. The protein resides in the cytoplasmic vesicle. It localises to the COPII-coated vesicle membrane. Its function is as follows. Required for the assembly of the V0 complex of the vacuolar ATPase (V-ATPase) in the endoplasmic reticulum. In Vanderwaltozyma polyspora (strain ATCC 22028 / DSM 70294 / BCRC 21397 / CBS 2163 / NBRC 10782 / NRRL Y-8283 / UCD 57-17) (Kluyveromyces polysporus), this protein is Vacuolar ATPase assembly integral membrane protein VMA21.